We begin with the raw amino-acid sequence, 40 residues long: Dolichyl-diphosphooligosaccharide--protein glycosyltransferase subunit 4 (40 aa).

Topologically, residues 1-4 (MITD) are lumenal. The helical transmembrane segment at 5-25 (VQLAIFSNVLGVFLFLLVVAY) threads the bilayer. The Cytoplasmic portion of the chain corresponds to 26–40 (HYINANTGKPSAKAK).

Belongs to the OST4 family. In terms of assembly, component of the oligosaccharyltransferase (OST) complex.

The protein resides in the endoplasmic reticulum membrane. In terms of biological role, subunit of the oligosaccharyl transferase (OST) complex that catalyzes the initial transfer of a defined glycan (Glc(3)Man(9)GlcNAc(2) in eukaryotes) from the lipid carrier dolichol-pyrophosphate to an asparagine residue within an Asn-X-Ser/Thr consensus motif in nascent polypeptide chains, the first step in protein N-glycosylation. N-glycosylation occurs cotranslationally and the complex associates with the Sec61 complex at the channel-forming translocon complex that mediates protein translocation across the endoplasmic reticulum (ER). All subunits are required for a maximal enzyme activity. The protein is Dolichyl-diphosphooligosaccharide--protein glycosyltransferase subunit 4 of Drosophila erecta (Fruit fly).